The sequence spans 194 residues: Imidazoleglycerol-phosphate dehydratase (194 aa).

It belongs to the imidazoleglycerol-phosphate dehydratase family.

It localises to the cytoplasm. The catalysed reaction is D-erythro-1-(imidazol-4-yl)glycerol 3-phosphate = 3-(imidazol-4-yl)-2-oxopropyl phosphate + H2O. The protein operates within amino-acid biosynthesis; L-histidine biosynthesis; L-histidine from 5-phospho-alpha-D-ribose 1-diphosphate: step 6/9. The protein is Imidazoleglycerol-phosphate dehydratase of Lacticaseibacillus casei (strain BL23) (Lactobacillus casei).